A 714-amino-acid polypeptide reads, in one-letter code: MSEEIITPVYCTGVSAQVQKQRARELGLGRHENAIKYLGQDYEQLRVRCLQSGTLFRDEAFPPVPQSLGYKDLGPNSSKTYGIKWKRPTELLSNPQFIVDGATRTDICQGALGDCWLLAAIASLTLNDTLLHRVVPHGQSFQNGYAGIFHFQLWQFGEWVDVVVDDLLPIKDGKLVFVHSAEGNEFWSALLEKAYAKVNGSYEALSGGSTSEGFEDFTGGVTEWYELRKAPSDLYQIILKALERGSLLGCSIDISSVLDMEAITFKKLVKGHAYSVTGAKQVNYRGQVVSLIRMRNPWGEVEWTGAWSDSSSEWNNVDPYERDQLRVKMEDGEFWMSFRDFMREFTRLEICNLTPDALKSRTIRKWNTTLYEGTWRRGSTAGGCRNYPATFWVNPQFKIRLDETDDPDDYGDRESGCSFVLALMQKHRRRERRFGRDMETIGFAVYEVPPELVGQPAVHLKRDFFLANASRARSEQFINLREVSTRFRLPPGEYVVVPSTFEPNKEGDFVLRFFSEKSAGTVELDDQIQANLPDEQVLSEEEIDENFKALFRQLAGEDMEISVKELRTILNRIISKHKDLRTKGFSLESCRSMVNLMDRDGNGKLGLVEFNILWNRIRNYLSIFRKFDLDKSGSMSAYEMRMAIESAGFKLNKKLYELIITRYSEPDLAVDFDNFVCCLVRLETMFRFFKTLDTDLDGVVTFDLFKWLQLTMFA.

At Ser-2 the chain carries N-acetylserine. In terms of domain architecture, Calpain catalytic spans 55 to 354 (LFRDEAFPPV…FTRLEICNLT (300 aa)). Positions 109 and 114 each coordinate Ca(2+). Catalysis depends on residues Cys-115, His-272, and Asn-296. Asn-316, Asp-318, and Asp-323 together coordinate Ca(2+). The residue at position 354 (Thr-354) is a Phosphothreonine. The segment at 355-526 (PDALKSRTIR…KSAGTVELDD (172 aa)) is domain III. The segment at 527-542 (QIQANLPDEQVLSEEE) is linker. EF-hand domains follow at residues 541–576 (EEIDENFKALFRQLAGEDMEISVKELRTILNRIISK), 585–618 (FSLESCRSMVNLMDRDGNGKLGLVEFNILWNRIR), 615–650 (NRIRNYLSIFRKFDLDKSGSMSAYEMRMAIESAGFK), and 680–714 (VRLETMFRFFKTLDTDLDGVVTFDLFKWLQLTMFA). The interval 543-713 (IDENFKALFR…LFKWLQLTMF (171 aa)) is domain IV. Ca(2+) contacts are provided by Asp-598, Asp-600, Asn-602, Lys-604, Glu-609, Asp-628, Asp-630, Ser-632, Ser-634, and Glu-639.

Belongs to the peptidase C2 family. Forms a heterodimer with a small (regulatory) subunit CAPNS1. Ca(2+) serves as cofactor. Undergoes calcium-induced successive autoproteolytic cleavages that generate a membrane-bound 78 kDa active form and an intracellular 75 kDa active form. Calpastatin reduces with high efficiency the transition from 78 kDa to 75 kDa calpain forms. In terms of tissue distribution, ubiquitous.

The protein localises to the cytoplasm. The protein resides in the cell membrane. It carries out the reaction Broad endopeptidase specificity.. With respect to regulation, activated by micromolar concentrations of calcium and inhibited by calpastatin. In terms of biological role, calcium-regulated non-lysosomal thiol-protease which catalyzes limited proteolysis of substrates involved in cytoskeletal remodeling and signal transduction. Proteolytically cleaves CTBP1 at 'Asn-375', 'Gly-387' and 'His-409'. Cleaves and activates caspase-7 (CASP7). The chain is Calpain-1 catalytic subunit from Homo sapiens (Human).